Consider the following 927-residue polypeptide: Phosphoenolpyruvate carboxylase (927 aa).

Active-site residues include His-160 and Lys-589.

It belongs to the PEPCase type 1 family. Requires Mg(2+) as cofactor.

It catalyses the reaction oxaloacetate + phosphate = phosphoenolpyruvate + hydrogencarbonate. Its function is as follows. Forms oxaloacetate, a four-carbon dicarboxylic acid source for the tricarboxylic acid cycle. The sequence is that of Phosphoenolpyruvate carboxylase from Rhodopseudomonas palustris (strain BisA53).